The sequence spans 253 residues: REF/SRPP-like protein Os05g0151300/LOC_Os05g05940 (253 aa).

Residues 1 to 26 (MADSGSDAPISNRPEEEVTVEKTPEM) are disordered. Residues 13–26 (RPEEEVTVEKTPEM) are compositionally biased toward basic and acidic residues.

It belongs to the REF/SRPP family.

The polypeptide is REF/SRPP-like protein Os05g0151300/LOC_Os05g05940 (Oryza sativa subsp. japonica (Rice)).